A 670-amino-acid polypeptide reads, in one-letter code: MKPEFVLPAPIRLDRPFDGRRRVVIDRVFPEIDGGRFPVKRVEGDRMTVEADIFTDGADTIVAELLYRRKGEAAWSAVPMTHIGNDRWKASFEVGAPGMCEYTVQGWVDHFETWRKGLQKKLDAGQDVSLDLRIGATIVELGAARAKDEDAGTLHHYVGLLSVGGSDAAVEAALSEGLLAAMRRSPEKAMATLYDKILLLQIDQKKAGFSTWYEFFPRSWSEEPGKHGTFRDCIKLLPRIARMGFDVIYLPPIHPIGLTKRKGKNNALVAGPDDPGSCWAIGSADGGHTSVHPELGTMEEFEAFVQEAEAQGISVALDIAFQCSPDHPWVKEHPQWFRWRPDGTVQFAENPPKRYEDILPIDFESEDWQNLWIALREVFLFWIGKGVKIFRVDNPHTKAFGFWEWALGSIREQYPETMFLAEAFTRPKLMARLAKGGYTHSYTYFTWRNTKHELQEYLTELTQTELREYMRPNFWPNTPDILHEELQGGSRARFIIRFVLAATLSSNYGIYGPAYELCEHVPYPGKEEYLDSEKYEIKQWDLDRPGNIRSEIAMVNRIRHNNPALQQTSDITFVKIEVSQGQEHDQLMGYVKCSPDGANIILTVVTLDDRNTQGGWLRFPLEKFGRPHTERFTVEDLISGRTFEWNGEWNYVELNPHQMPAHIFRVNLPS.

Alpha-maltose 1-phosphate-binding residues include Lys262, Gln322, and Asp357. The active-site Nucleophile is Asp393. Residue Asn394 coordinates alpha-maltose 1-phosphate. The active-site Proton donor is Glu422. 534–535 (KY) is a binding site for alpha-maltose 1-phosphate.

It belongs to the glycosyl hydrolase 13 family. GlgE subfamily. Homodimer.

The catalysed reaction is alpha-maltose 1-phosphate + [(1-&gt;4)-alpha-D-glucosyl](n) = [(1-&gt;4)-alpha-D-glucosyl](n+2) + phosphate. In terms of biological role, maltosyltransferase that uses maltose 1-phosphate (M1P) as the sugar donor to elongate linear or branched alpha-(1-&gt;4)-glucans. Is involved in a branched alpha-glucan biosynthetic pathway from trehalose, together with TreS, Mak and GlgB. The chain is Alpha-1,4-glucan:maltose-1-phosphate maltosyltransferase from Chlorobaculum tepidum (strain ATCC 49652 / DSM 12025 / NBRC 103806 / TLS) (Chlorobium tepidum).